A 1199-amino-acid polypeptide reads, in one-letter code: MAGHLVNYGKHRTRRSYARIKEVLDLPNLIKIQTNSYQWFLDEGLKEMFDDIMPIDDFQGKLSLEFVGYQLLEPKYTVEEARQHDANYSAPLHVTLRLTNHETGEIKSQDVFFGDFPLMTKQGTFIINGAERVIVSQLVRSPGVYFHSETDKNSRVTYGTTVIPNRGAWLEYETDAKDIAYVRIDRTRKIPLTELVRALGFGSDQDIINMFGDNDSLMLTLEKDVHKNTDDSRTDEALKDIYERLRPGEPKTADSSRSLLYARFFDPKRYDLASVGRYKVNKKLSLKTRLLNQVLAETLADPDTGEVIAQKGTKVDRQVMDKLAPYLDRDDFKTITYQPSDQGVVTDPIELQSIKVYSQVTPDKEINLIGNGHIGKKVKHIVPADVLASMNYFLNLQEGLGSIDDIDHLGNRRIRSVGELLQNQFRIGLSRMERVVRERMSIQDTATVTPQQLINIRPVVASIKEFFGSSQLSQFMDQTNPLGELTHKRRLSALGPGGLTRDRAGYEVRDVHYTHYGRMCPIETPEGPNIGLINSLASYAVVNPYGFIETPYRRVSWDTHKVTDKIDYLTADEEDNYIVAQANSPLNDDGSFVDETVLARHKDNNIEISPDKVDYMDVSPKQVVAVATACIPFLENDDSNRALMGANMQRQAVPLVNPHAPLVGTGMEYKAAHDSGTAVLANNAGTVEYVDAKQIRVRREDGALDAYNLMKFKRSNAGKNYNQRPIVTIGDHVDVDEIIADGPAMQNGELALGQNPIIAFMTWNMYNYEDAIVLSERLVKDDVYTSIHIEEYESEARDTKLGPEEVTREIPNVGEEALKDLDEFGVVRVGAEVRDGDILVGKVTPKGVTELSAEERLLHAIFGEKAREVRDTSLRVPHGGGGIIQDVKIFTREAGDELSPGVNMMVRVYITQKRKIQVGDKMAGRHGNKGTVSVVVPEEDMPYLPDGTPVDICLSPMGVPSRMNIGQVLELHLGMAARNLGIHVATPVFDGANDKDLWATVKEAGMASDGKSVLYDGRTGEPFENRVSVGIMYYMKLSHMVDDKIHARSIGPYSLVTQQPLGGKAQFGGQRFGEMEVWALEAYGAAYTLQEILTYKSDDVVGRVKTYEAIVKGEPIPKPGVPESFRVLVKELQALGLDMKVLGADKKEIELRDMDDDEDDIVSVDALAKFAAQQEEKKAHEAAAQATDGKSANSTDDKK.

The interval 1175–1199 is disordered; the sequence is EEKKAHEAAAQATDGKSANSTDDKK. Over residues 1188–1199 the composition is skewed to polar residues; sequence DGKSANSTDDKK.

This sequence belongs to the RNA polymerase beta chain family. In terms of assembly, the RNAP catalytic core consists of 2 alpha, 1 beta, 1 beta' and 1 omega subunit. When a sigma factor is associated with the core the holoenzyme is formed, which can initiate transcription.

The catalysed reaction is RNA(n) + a ribonucleoside 5'-triphosphate = RNA(n+1) + diphosphate. DNA-dependent RNA polymerase catalyzes the transcription of DNA into RNA using the four ribonucleoside triphosphates as substrates. The chain is DNA-directed RNA polymerase subunit beta from Lacticaseibacillus casei (strain BL23) (Lactobacillus casei).